The primary structure comprises 474 residues: Dihydrolipoyl dehydrogenase (474 aa).

FAD contacts are provided by residues 36–45 (ERYNTLGGVC), Lys54, and Gly117. Cys45 and Cys50 form a disulfide bridge. NAD(+) is bound by residues 182 to 186 (GGGII) and Glu205. Lys220 carries the post-translational modification N6-acetyllysine. NAD(+) is bound by residues Val238 and 270–273 (AIGR). FAD contacts are provided by Asp313 and Ala321. His445 (proton acceptor) is an active-site residue.

It belongs to the class-I pyridine nucleotide-disulfide oxidoreductase family. Homodimer. FAD is required as a cofactor.

It localises to the cytoplasm. The catalysed reaction is N(6)-[(R)-dihydrolipoyl]-L-lysyl-[protein] + NAD(+) = N(6)-[(R)-lipoyl]-L-lysyl-[protein] + NADH + H(+). Lipoamide dehydrogenase is a component of the glycine cleavage system as well as of the alpha-ketoacid dehydrogenase complexes. The protein is Dihydrolipoyl dehydrogenase (lpdA) of Shigella flexneri.